The sequence spans 251 residues: MAASTMSICSSACTDSWRVVDCPESCCEPCCCAPAPSLTLVCTPVSCVSSPCCQTACEPSACQSGYTSSCTTPCYQQSSCQPDCCTSSPCQQACCVPVCCVPVCCVPVCNKPVCFVPTCSESSPSCCQQSSCQPTCCTSSPCQQACCVPVCSKSVCYVPVCSGASTSCCQQSSCQPACCTASCCRPSSSVSLLCHPVCKSTCCVPVPSCGASASSCQPSCCRTASCVSLLCRPVCSRPACYSLCSGQKSSC.

15 tandem repeats follow at residues 26–30, 31–35, 52–56, 84–88, 94–98, 99–103, 104–109, 126–130, 136–140, 146–150, 168–172, 178–182, 183–187, 202–206, and 220–224. The segment at 26–224 is 15 X 5 AA repeats of C-C-X(3); it reads CCEPCCCAPA…SCQPSCCRTA (199 aa).

It belongs to the KRTAP type 10 family. As to quaternary structure, interacts with hair keratins. In terms of tissue distribution, restricted to a narrow region of the hair fiber cuticle, lying approximately 20 cell layers above the apex of the dermal papilla of the hair root; not detected in any other tissues.

Functionally, in the hair cortex, hair keratin intermediate filaments are embedded in an interfilamentous matrix, consisting of hair keratin-associated proteins (KRTAP), which are essential for the formation of a rigid and resistant hair shaft through their extensive disulfide bond cross-linking with abundant cysteine residues of hair keratins. The matrix proteins include the high-sulfur and high-glycine-tyrosine keratins. This Homo sapiens (Human) protein is Keratin-associated protein 10-10 (KRTAP10-10).